The primary structure comprises 121 residues: Structural protein p14.5 (121 aa).

Disordered stretches follow at residues 1 to 24 (MADF…IGSL) and 84 to 121 (TSLV…HKSK). A2 is modified (N-acetylalanine; by host). Basic residues predominate over residues 104-121 (KPKKKKHLFPKLSSHKSK).

This sequence belongs to the asfivirus structural protein p14.5 family. Interacts with the major capsid protein. Interacts with host IRF3; this interaction interferes with the recruitment of IRF3 to TBK1. In terms of processing, acetylated.

The protein resides in the virion. In terms of biological role, structural protein required for transport of intracellular particles from the assembly sites to the plasma membrane. Binds to both ssDNA and dsDNA. Suppressed the activation of the cGAS/STING pathway by interfering with the recruitment of IRF3 to TBK1, which in turn suppresses IRF3 phosphorylation, decreasing interferon production. In Ornithodoros (relapsing fever ticks), this protein is Structural protein p14.5.